Reading from the N-terminus, the 365-residue chain is Prostaglandin E2 receptor EP3 subtype (365 aa).

Residues 1–22 are disordered; it reads MASMWAPEHSAEAHSNLSSTTD. Topologically, residues 1-30 are extracellular; it reads MASMWAPEHSAEAHSNLSSTTDDCGSVSVA. Residues 13 to 22 are compositionally biased toward polar residues; that stretch reads AHSNLSSTTD. Asparagine 16 carries N-linked (GlcNAc...) asparagine glycosylation. Residues 31-55 form a helical membrane-spanning segment; that stretch reads FPITMMVTGFVGNALAMLLVSRSYR. Topologically, residues 56 to 68 are cytoplasmic; sequence RRESKRKKSFLLC. Residues 69–89 traverse the membrane as a helical segment; that stretch reads IGWLALTDLVGQLLTSPVVIL. At 90–108 the chain is on the extracellular side; the sequence is VYLSQRRWEQLDPSGRLCT. Cysteine 107 and cysteine 184 are disulfide-bonded. The helical transmembrane segment at 109–130 threads the bilayer; that stretch reads FFGLTMTVFGLSSLLVASAMAV. The Cytoplasmic portion of the chain corresponds to 131-151; sequence ERALAIRAPHWYASHMKTRAT. The chain crosses the membrane as a helical span at residues 152–173; the sequence is PVLLGVWLSVLAFALLPVLGVG. The Extracellular segment spans residues 174–203; sequence RYSVQWPGTWCFISTGPAGNETDPAREPGS. A glycan (N-linked (GlcNAc...) asparagine) is linked at asparagine 193. Residues 204–229 traverse the membrane as a helical segment; sequence VAFASAFACLGLLALVVTFACNLATI. Residues 230–259 lie on the Cytoplasmic side of the membrane; that stretch reads KALVSRCRAKAAVSQSSAQWGRITTETAIQ. A helical transmembrane segment spans residues 260–283; sequence LMGIMCVLSVCWSPLLIMMLKMIF. Topologically, residues 284–303 are extracellular; it reads NQMSVEQCKTQMGKEKECNS. Residues 304-325 form a helical membrane-spanning segment; the sequence is FLIAVRLASLNQILDPWVYLLL. Over 326-365 the chain is Cytoplasmic; it reads RKILLRKFCQIRDHTNYASSSTSLPCPGSSALMWSDQLER.

The protein belongs to the G-protein coupled receptor 1 family. As to quaternary structure, interacts (via C-terminus) with MKLN1. Post-translationally, ligand binding is affected by cAMP-dependent phosphorylation in brain membranes. Detected in platelets. Kidney, uterus, and mastocytoma cells, and in a lesser amount in brain, thymus, lung, heart, stomach and spleen.

Its subcellular location is the cell membrane. Its function is as follows. Receptor for prostaglandin E2 (PGE2). Required for normal development of fever in response to pyrinogens, including IL1B, prostaglandin E2 and bacterial lipopolysaccharide (LPS). Required for normal potentiation of platelet aggregation by prostaglandin E2, and thus plays a role in the regulation of blood coagulation. Required for increased HCO3(-) secretion in the duodenum in response to mucosal acidification, and thereby contributes to the protection of the mucosa against acid-induced ulceration. Not required for normal kidney function, normal urine volume and osmolality. Functionally, receptor for prostaglandin E2 (PGE2); ligand binding activates a signaling cascade via G(i) proteins that leads to inhibition of adenylate cyclase. Shows high agonist-independent constitutive inhibition of adenylate cyclase. In terms of biological role, receptor for prostaglandin E2 (PGE2); ligand binding activates a signaling cascade via G(i) proteins that leads to inhibition of adenylate cyclase. Requires much higher ligand concentrations than isoform Alpha for activation. Does not display agonist-independent constitutive inhibition of adenylate cyclase. Receptor for prostaglandin E2 (PGE2); ligand binding can activate several distinct signaling cascades, resulting in activation or inhibition of adenylate cyclase. The protein is Prostaglandin E2 receptor EP3 subtype (Ptger3) of Mus musculus (Mouse).